The following is a 371-amino-acid chain: Aspartate-semialdehyde dehydrogenase (371 aa).

NADP(+) is bound by residues 11-14, 38-39, and glutamine 75; these read RGMV and TS. Arginine 104 contributes to the phosphate binding site. The active-site Acyl-thioester intermediate is the cysteine 137. Position 164 (glutamine 164) interacts with substrate. 167–168 provides a ligand contact to NADP(+); it reads SG. Glutamate 243 is a binding site for substrate. Lysine 246 serves as a coordination point for phosphate. Residue arginine 269 coordinates substrate. Residue histidine 276 is the Proton acceptor of the active site. Glutamine 352 provides a ligand contact to NADP(+).

Belongs to the aspartate-semialdehyde dehydrogenase family. As to quaternary structure, homodimer.

The catalysed reaction is L-aspartate 4-semialdehyde + phosphate + NADP(+) = 4-phospho-L-aspartate + NADPH + H(+). The protein operates within amino-acid biosynthesis; L-lysine biosynthesis via DAP pathway; (S)-tetrahydrodipicolinate from L-aspartate: step 2/4. It functions in the pathway amino-acid biosynthesis; L-methionine biosynthesis via de novo pathway; L-homoserine from L-aspartate: step 2/3. It participates in amino-acid biosynthesis; L-threonine biosynthesis; L-threonine from L-aspartate: step 2/5. In terms of biological role, catalyzes the NADPH-dependent formation of L-aspartate-semialdehyde (L-ASA) by the reductive dephosphorylation of L-aspartyl-4-phosphate. The chain is Aspartate-semialdehyde dehydrogenase from Buchnera aphidicola subsp. Schizaphis graminum (strain Sg).